Consider the following 1262-residue polypeptide: Clustered mitochondria protein homolog (1262 aa).

The interval 1 to 47 (MTSGSELKAEVDAPVVNGKDELVHEEDNNDSGHSSINTPDASEDKQT) is disordered. Polar residues predominate over residues 31-40 (SGHSSINTPD). The Clu domain occupies 335 to 580 (AIELIEPFRV…RSMPPDVHYL (246 aa)).

This sequence belongs to the CLU family.

It is found in the cytoplasm. In terms of biological role, mRNA-binding protein involved in proper cytoplasmic distribution of mitochondria. The protein is Clustered mitochondria protein homolog of Caenorhabditis briggsae.